Consider the following 382-residue polypeptide: MEVLWMLLVLLVLHLSSLAMSLSTCKAVDMEEVRKRRIEAIRGQILSKLKLDKTPDVDSEKMTVPSEAIFLYNSTLEVIREKATREEEHVGHDQNIQDYYAKQVYRFESITELEDHEFKFKFNASHVRENVGMNSLLHHAELRMYKKQTDKNMDQRMELFWKYQENGTTHSRYLESKYITPVTDDEWMSFDVTKTVNEWLKRAEENEQFGLQPACKCPTPQAKDIDIEGFPALRGDLASLSSKENTKPYLMITSMPAERIDTVTSSRKKRGVGQEYCFGNNGPNCCVKPLYINFRKDLGWKWIHEPKGYEANYCLGNCPYIWSMDTQYSKVLSLYNQNNPGASISPCCVPDVLEPLPIIYYVGRTAKVEQLSNMVVRSCNCS.

The N-terminal stretch at 1 to 21 (MEVLWMLLVLLVLHLSSLAMS) is a signal peptide. Residues 22 to 65 (LSTCKAVDMEEVRKRRIEAIRGQILSKLKLDKTPDVDSEKMTVP) form a straightjacket domain region. An arm domain region spans residues 66–263 (SEAIFLYNST…SMPAERIDTV (198 aa)). N-linked (GlcNAc...) asparagine glycosylation is found at Asn-73, Asn-123, and Asn-166. Residues 218 to 242 (PTPQAKDIDIEGFPALRGDLASLSS) form a bowtie tail region. The Cell attachment site motif lies at 234 to 236 (RGD). Intrachain disulfides connect Cys-277–Cys-286, Cys-285–Cys-348, Cys-314–Cys-379, and Cys-318–Cys-381.

This sequence belongs to the TGF-beta family. As to quaternary structure, latency-associated peptide: Homodimer; disulfide-linked. Latency-associated peptide: Interacts with Transforming growth factor beta-1 (TGF-beta-1) chain; interaction is non-covalent and maintains (TGF-beta-1) in a latent state; each Latency-associated peptide (LAP) monomer interacts with TGF-beta-1 in the other monomer. Transforming growth factor beta-1: Homodimer; disulfide-linked. Transforming growth factor beta-1: Interacts with TGF-beta receptors (tgfbr1 and tgfbr2), leading to signal transduction. Post-translationally, transforming growth factor beta-1 proprotein: The precursor proprotein is cleaved in the Golgi apparatus to form Transforming growth factor beta-1 (TGF-beta-1) and Latency-associated peptide (LAP) chains, which remain non-covalently linked, rendering TGF-beta-1 inactive.

Its subcellular location is the secreted. The protein resides in the extracellular space. It is found in the extracellular matrix. Its function is as follows. Transforming growth factor beta-1 proprotein: Precursor of the Latency-associated peptide (LAP) and Transforming growth factor beta-1 (TGF-beta-1) chains, which constitute the regulatory and active subunit of TGF-beta-1, respectively. In terms of biological role, required to maintain the Transforming growth factor beta-1 (TGF-beta-1) chain in a latent state during storage in extracellular matrix. Associates non-covalently with TGF-beta-1 and regulates its activation via interaction with 'milieu molecules', such as LTBP1, LRRC32/GARP and LRRC33/NRROS, that control activation of TGF-beta-1. Interaction with integrins (ITGAV:ITGB6 or ITGAV:ITGB8) results in distortion of the Latency-associated peptide chain and subsequent release of the active TGF-beta-1. Transforming growth factor beta-1: Multifunctional protein that regulates the growth and differentiation of various cell types and is involved in various processes, such as normal development, immune function, microglia function and responses to neurodegeneration. Activation into mature form follows different steps: following cleavage of the proprotein in the Golgi apparatus, Latency-associated peptide (LAP) and Transforming growth factor beta-1 (TGF-beta-1) chains remain non-covalently linked rendering TGF-beta-1 inactive during storage in extracellular matrix. At the same time, LAP chain interacts with 'milieu molecules', such as ltbp1, lrrc32/garp and lrrc33/nrros that control activation of TGF-beta-1 and maintain it in a latent state during storage in extracellular milieus. TGF-beta-1 is released from LAP by integrins (ITGAV:ITGB6 or ITGAV:ITGB8): integrin-binding to LAP stabilizes an alternative conformation of the LAP bowtie tail and results in distortion of the LAP chain and subsequent release of the active TGF-beta-1. Once activated following release of LAP, TGF-beta-1 acts by binding to TGF-beta receptors (tgfbr1 and tgfbr2), which transduce signal. While expressed by many cells types, TGF-beta-1 only has a very localized range of action within cell environment thanks to fine regulation of its activation by Latency-associated peptide chain (LAP) and 'milieu molecules'. Plays an important role in bone remodeling: acts as a potent stimulator of osteoblastic bone formation. Can promote either T-helper 17 cells (Th17) or regulatory T-cells (Treg) lineage differentiation in a concentration-dependent manner. Can induce epithelial-to-mesenchymal transition (EMT) and cell migration in various cell types. The polypeptide is Transforming growth factor beta-1 proprotein (tgfb1) (Xenopus laevis (African clawed frog)).